The following is a 343-amino-acid chain: Single-pass membrane and coiled-coil domain-containing protein 2 (343 aa).

The span at 86-99 (EHDQDLSKQDKQET) shows a compositional bias: basic and acidic residues. A disordered region spans residues 86–108 (EHDQDLSKQDKQETDVDEDPQAS). The stretch at 152 to 238 (TEKIDNIIKK…SAKLRMYQME (87 aa)) forms a coiled coil. A helical membrane pass occupies residues 284-304 (IFIMFDVLTVTGLLCYILFFG).

The protein resides in the membrane. The protein is Single-pass membrane and coiled-coil domain-containing protein 2 (SMCO2) of Homo sapiens (Human).